The primary structure comprises 201 residues: MQLGLDFNLVEDLVAGVDEVGRGPLCGPVVTAAVILDPSRPILGLNDSKKLSEARREALFEEIREKALAWCVARAEVEEIDRLNILHATMLAMQRAVEGLSVTPRLALIDGNRCPRLAVPSAPVVKGDSQVPAIAAASILAKVSRDREMVELDRLYPGYGMAGHKGYPTAVHLEALSRLGPTPIHRRSFAPVRELLDASVE.

One can recognise an RNase H type-2 domain in the interval 12 to 201; sequence DLVAGVDEVG…VRELLDASVE (190 aa). D18, E19, and D110 together coordinate a divalent metal cation.

This sequence belongs to the RNase HII family. Mn(2+) is required as a cofactor. Mg(2+) serves as cofactor.

The protein localises to the cytoplasm. It carries out the reaction Endonucleolytic cleavage to 5'-phosphomonoester.. In terms of biological role, endonuclease that specifically degrades the RNA of RNA-DNA hybrids. This is Ribonuclease HII from Pseudomonas paraeruginosa (strain DSM 24068 / PA7) (Pseudomonas aeruginosa (strain PA7)).